The following is a 468-amino-acid chain: MDASAIKLTPKDIVSQLNEYIVGQNDAKKKVAIALRNRYRRSQLDEEMKQEIVPKNILMIGPTGVGKTEIARRMAKIVGAPFIKVEATKFTEVGYVGRDVESMVRDLVDVAVRLVKEDRKDKVKDEAVKKANDKLVKLLVPSMKKKANQNAGNPFESIFGGMMPNFGNNDEEDEEPPTEDIKTKRSEIRSQLLNGQLEEEKVRIKVEQDPGALGMLGTNQNQQVQDMMNQLMPKKKVEREVPVKTARKILADEYADELIDHETANQEALELAEQMGIIFIDEIDKVASNNQGGGQDVSRQGVQRDILPIVEGSVVQTKYGSVNTEHMLFIGAGAFHVSKPSDLIPELQGRFPIRVELDSLSVDDFVNILKEPKLSLIKQYEALLQTEEVTVNFTDEAITRLAEIAYQVNQDTDNIGARRLHTILEKMLEDLSYEAPGMPNAVVDITAQYVDDKLKSISTNKDLSAFIL.

ATP is bound by residues V22 and 64-69 (GVGKTE). The tract at residues 166-187 (FGNNDEEDEEPPTEDIKTKRSE) is disordered. Positions 169-178 (NDEEDEEPPT) are enriched in acidic residues. The ATP site is built by D281, E346, and R418.

It belongs to the ClpX chaperone family. HslU subfamily. In terms of assembly, a double ring-shaped homohexamer of HslV is capped on each side by a ring-shaped HslU homohexamer. The assembly of the HslU/HslV complex is dependent on binding of ATP.

It localises to the cytoplasm. ATPase subunit of a proteasome-like degradation complex; this subunit has chaperone activity. The binding of ATP and its subsequent hydrolysis by HslU are essential for unfolding of protein substrates subsequently hydrolyzed by HslV. HslU recognizes the N-terminal part of its protein substrates and unfolds these before they are guided to HslV for hydrolysis. This chain is ATP-dependent protease ATPase subunit HslU, found in Staphylococcus carnosus (strain TM300).